Here is a 262-residue protein sequence, read N- to C-terminus: Indole-3-glycerol phosphate synthase (262 aa).

The protein belongs to the TrpC family.

It carries out the reaction 1-(2-carboxyphenylamino)-1-deoxy-D-ribulose 5-phosphate + H(+) = (1S,2R)-1-C-(indol-3-yl)glycerol 3-phosphate + CO2 + H2O. Its pathway is amino-acid biosynthesis; L-tryptophan biosynthesis; L-tryptophan from chorismate: step 4/5. The chain is Indole-3-glycerol phosphate synthase from Bordetella petrii (strain ATCC BAA-461 / DSM 12804 / CCUG 43448).